A 215-amino-acid chain; its full sequence is Pyridoxine/pyridoxamine 5'-phosphate oxidase (215 aa).

Residues R9 to Y12 and K69 contribute to the substrate site. FMN-binding positions include R64–K69, F79–S80, K86, and Q108. Substrate contacts are provided by Y126, R130, and S134. FMN-binding positions include Q143 to S144 and W188. Substrate is bound at residue R194–H196. Residue R198 coordinates FMN.

The protein belongs to the pyridoxamine 5'-phosphate oxidase family. As to quaternary structure, homodimer. FMN serves as cofactor.

The enzyme catalyses pyridoxamine 5'-phosphate + O2 + H2O = pyridoxal 5'-phosphate + H2O2 + NH4(+). It catalyses the reaction pyridoxine 5'-phosphate + O2 = pyridoxal 5'-phosphate + H2O2. The protein operates within cofactor metabolism; pyridoxal 5'-phosphate salvage; pyridoxal 5'-phosphate from pyridoxamine 5'-phosphate: step 1/1. It participates in cofactor metabolism; pyridoxal 5'-phosphate salvage; pyridoxal 5'-phosphate from pyridoxine 5'-phosphate: step 1/1. Its function is as follows. Catalyzes the oxidation of either pyridoxine 5'-phosphate (PNP) or pyridoxamine 5'-phosphate (PMP) into pyridoxal 5'-phosphate (PLP). The chain is Pyridoxine/pyridoxamine 5'-phosphate oxidase from Ectopseudomonas mendocina (strain ymp) (Pseudomonas mendocina).